A 68-amino-acid chain; its full sequence is Large ribosomal subunit protein bL32 (68 aa).

The protein belongs to the bacterial ribosomal protein bL32 family.

The polypeptide is Large ribosomal subunit protein bL32 (Aster yellows witches'-broom phytoplasma (strain AYWB)).